The chain runs to 164 residues: Phosphopantetheine adenylyltransferase (164 aa).

Residue Ser9 participates in substrate binding. ATP-binding positions include Ser9–Phe10 and His17. Substrate is bound by residues Lys41, Val78, and Arg92. Residues Gly93 to Arg95, Glu103, and Val128 to Thr134 each bind ATP.

It belongs to the bacterial CoaD family. In terms of assembly, homohexamer. Requires Mg(2+) as cofactor.

Its subcellular location is the cytoplasm. The catalysed reaction is (R)-4'-phosphopantetheine + ATP + H(+) = 3'-dephospho-CoA + diphosphate. It participates in cofactor biosynthesis; coenzyme A biosynthesis; CoA from (R)-pantothenate: step 4/5. Functionally, reversibly transfers an adenylyl group from ATP to 4'-phosphopantetheine, yielding dephospho-CoA (dPCoA) and pyrophosphate. This is Phosphopantetheine adenylyltransferase from Brucella suis (strain ATCC 23445 / NCTC 10510).